We begin with the raw amino-acid sequence, 1354 residues long: Rho-associated protein kinase 1 (1354 aa).

N-acetylserine is present on Ser2. The Protein kinase domain maps to 76–338 (YEVVKVIGRG…VEEIKRHLFF (263 aa)). ATP contacts are provided by residues 82-90 (IGRGAFGEV) and Lys105. The active-site Proton acceptor is the Asp198. The region spanning 341-409 (DQWAWETLRD…YSNRRYLSSA (69 aa)) is the AGC-kinase C-terminal domain. The interval 368–727 (FDDLEEDKGE…KKLKEEREAR (360 aa)) is interaction with FHOD1. Positions 422–692 (KSLQESLQKT…RLEQEVNEHK (271 aa)) form a coiled coil. Positions 479–556 (STVSQIEKEK…LEEANDLLRT (78 aa)) constitute an REM-1 domain. The residue at position 647 (Lys647) is an N6-acetyllysine. Positions 707 to 946 (EAKSVAMCEM…TVSRLEEANS (240 aa)) are SHROOM3 binding. The RhoBD domain maps to 949–1015 (TKDIEILRRE…LAEIMNRKDF (67 aa)). Residues 998-1010 (LKTQAVNKLAEIM) are RHOA binding. The stretch at 1011–1102 (NRKDFKIDRK…KLLDLSDSTS (92 aa)) forms a coiled coil. Ser1105 and Ser1108 each carry phosphoserine. Residues 1115-1354 (NLPESRIEGW…VVKNTSGKTS (240 aa)) are auto-inhibitory. A PH domain is found at 1118 to 1317 (ESRIEGWLSV…WVTHLVKKIP (200 aa)). The Phorbol-ester/DAG-type zinc finger occupies 1228-1281 (GHEFIPTLYHFPANCDACAKPLWHVFKPPPALECRRCHVKCHRDHLDKKEDLIC). The disordered stretch occupies residues 1320-1354 (PPSGFVRASPRTLSTRSTANQSFRKVVKNTSGKTS). At Ser1328 the chain carries Phosphoserine. The span at 1330–1354 (RTLSTRSTANQSFRKVVKNTSGKTS) shows a compositional bias: polar residues.

It belongs to the protein kinase superfamily. AGC Ser/Thr protein kinase family. As to quaternary structure, homodimer. Interacts with RHOB, RHOC, MYLC2B and PTEN. Interacts with ITGB1BP1 (via N-terminus and PTB domain). Interacts with RHOA (activated by GTP), CHORDC1, DAPK3, GEM, JIP3, RHOE, PPP1R12A, PFN1, LIMK1, LIMK2 and TSG101. Interacts with FHOD1 in a Src-dependent manner. Interacts with SHROOM3. It depends on Mg(2+) as a cofactor. Post-translationally, autophosphorylated on serine and threonine residues. Cleaved by caspase-3 during apoptosis. This leads to constitutive activation of the kinase and membrane blebbing. As to expression, detected in blood platelets.

The protein resides in the cytoplasm. Its subcellular location is the cytoskeleton. It localises to the microtubule organizing center. The protein localises to the centrosome. It is found in the centriole. The protein resides in the golgi apparatus membrane. Its subcellular location is the cell projection. It localises to the bleb. The protein localises to the cell membrane. It is found in the lamellipodium. The protein resides in the ruffle. It catalyses the reaction L-seryl-[protein] + ATP = O-phospho-L-seryl-[protein] + ADP + H(+). The enzyme catalyses L-threonyl-[protein] + ATP = O-phospho-L-threonyl-[protein] + ADP + H(+). With respect to regulation, activated by RHOA binding. Inhibited by Y-27632. Protein kinase which is a key regulator of the actin cytoskeleton and cell polarity. Involved in regulation of smooth muscle contraction, actin cytoskeleton organization, stress fiber and focal adhesion formation, neurite retraction, cell adhesion and motility via phosphorylation of DAPK3, GFAP, LIMK1, LIMK2, MYL9/MLC2, TPPP, PFN1 and PPP1R12A. Phosphorylates FHOD1 and acts synergistically with it to promote SRC-dependent non-apoptotic plasma membrane blebbing. Phosphorylates JIP3 and regulates the recruitment of JNK to JIP3 upon UVB-induced stress. Acts as a suppressor of inflammatory cell migration by regulating PTEN phosphorylation and stability. Acts as a negative regulator of VEGF-induced angiogenic endothelial cell activation. Required for centrosome positioning and centrosome-dependent exit from mitosis. Plays a role in terminal erythroid differentiation. Inhibits podocyte motility via regulation of actin cytoskeletal dynamics and phosphorylation of CFL1. Promotes keratinocyte terminal differentiation. Involved in osteoblast compaction through the fibronectin fibrillogenesis cell-mediated matrix assembly process, essential for osteoblast mineralization. May regulate closure of the eyelids and ventral body wall by inducing the assembly of actomyosin bundles. This chain is Rho-associated protein kinase 1 (ROCK1), found in Homo sapiens (Human).